A 130-amino-acid chain; its full sequence is Small ribosomal subunit protein uS9 (130 aa).

It belongs to the universal ribosomal protein uS9 family.

This is Small ribosomal subunit protein uS9 from Polaromonas sp. (strain JS666 / ATCC BAA-500).